The chain runs to 226 residues: CD9 antigen (226 aa).

Topologically, residues 1–12 are cytoplasmic; that stretch reads MPVKGGTKCIKY. Residue cysteine 9 is the site of S-palmitoyl cysteine attachment. Residues 13 to 33 traverse the membrane as a helical segment; sequence LLFGFNFIFWLAGIAVLAVGL. The Extracellular portion of the chain corresponds to 34-53; it reads WLRFDSQTKSIFEQDSQPSS. Residues 54–74 form a helical membrane-spanning segment; the sequence is FYTGVYILIGAGALMMLVGFL. Residues 75–85 are Cytoplasmic-facing; that stretch reads GCCGAVQESQC. Residues cysteine 76, cysteine 77, and cysteine 85 are each lipidated (S-palmitoyl cysteine). Residues 86-109 traverse the membrane as a helical segment; sequence MLGLFFGFLLVIFAIEIAAAIWGY. The Extracellular portion of the chain corresponds to 110 to 193; it reads SHKDEVIQEV…KEVFHNKFHI (84 aa). 2 disulfide bridges follow: cysteine 150/cysteine 179 and cysteine 151/cysteine 165. The chain crosses the membrane as a helical span at residues 194–219; that stretch reads IGAVGIGIAVVMIFGMIFSMILCCAI. 2 S-palmitoyl cysteine lipidation sites follow: cysteine 216 and cysteine 217. The Cytoplasmic segment spans residues 220 to 226; the sequence is RRSREMV.

This sequence belongs to the tetraspanin (TM4SF) family. In terms of assembly, forms both disulfide-linked homodimers and higher homooligomers as well as heterooligomers with other members of the tetraspanin family. Interacts (via the second extracellular domain) with integrin ITGAV:ITGB3. Interacts with integrin ITGA6:ITGB1; interaction takes place in oocytes and is involved in sperm-egg fusion. Part of integrin-tetraspanin complexes composed of CD81, beta-1 and beta-2 integrins in the membrane of monocyte/macrophages. Interacts with CD63; identified in a complex with CD63 and ITGB3. Associates with CR2/CD21 and with PTGFRN/CD9P1. Part of a complex composed of CD9, CD81, PTGFRN and IGSF8. Interacts directly with IGSF8. Interacts with PDPN; this interaction is homophilic and attenuates platelet aggregation and pulmonary metastasis induced by PDPN. Interacts (on T cell side) with CD81 at immunological synapses between antigen-presenting cells and T cells. In terms of processing, palmitoylated at a low, basal level in unstimulated platelets. The level of palmitoylation increases when platelets are activated by thrombin (in vitro). The protein exists in three forms with molecular masses between 22 and 27 kDa, and is known to carry covalently linked fatty acids. Palmitoylation by ZDHHC2 regulates CD9 expression, association with other tetraspanin family proteins and function in cell adhesion.

It localises to the cell membrane. It is found in the membrane. The protein resides in the secreted. The protein localises to the extracellular exosome. In terms of biological role, integral membrane protein associated with integrins, which regulates different processes, such as sperm-egg fusion, platelet activation and aggregation, and cell adhesion. Present at the cell surface of oocytes and plays a key role in sperm-egg fusion, possibly by organizing multiprotein complexes and the morphology of the membrane required for the fusion. In myoblasts, associates with CD81 and PTGFRN and inhibits myotube fusion during muscle regeneration. In macrophages, associates with CD81 and beta-1 and beta-2 integrins, and prevents macrophage fusion into multinucleated giant cells specialized in ingesting complement-opsonized large particles. Also prevents the fusion between mononuclear cell progenitors into osteoclasts in charge of bone resorption. Acts as a receptor for PSG17. Involved in platelet activation and aggregation. Regulates paranodal junction formation. Involved in cell adhesion, cell motility and tumor metastasis. The chain is CD9 antigen from Felis catus (Cat).